The sequence spans 932 residues: Chitin synthase regulatory factor 3 (932 aa).

The span at 1–16 (MKDSHSSRRKYEKEKL) shows a compositional bias: basic and acidic residues. Disordered regions lie at residues 1–53 (MKDS…PTSR), 264–356 (TLEE…LQQP), and 374–406 (EVPA…NPTV). 3 stretches are compositionally biased toward polar residues: residues 35-53 (SGNT…PTSR), 274-285 (DSITNTVSNASS), and 308-319 (SHFSSTDSNTDS). The span at 337 to 349 (KSSETLKNPRNDD) shows a compositional bias: basic and acidic residues. A Phosphoserine modification is found at Ser-393. Sel1-like repeat units lie at residues 638–674 (PEAL…KKGH), 675–710 (PLSN…EMDV), 711–747 (VEAM…KSKG), 751–788 (VRAM…VYGY), 789–825 (AAAQ…EQDY), 826–863 (GEAE…CKGL), and 864–899 (AKAQ…KQGF). The disordered stretch occupies residues 905 to 932 (RLEEQALSSKQTHSKAPKKKQQEQCVVM).

The sequence is that of Chitin synthase regulatory factor 3 (chr3) from Schizosaccharomyces pombe (strain 972 / ATCC 24843) (Fission yeast).